The following is a 176-amino-acid chain: Large ribosomal subunit protein uL6 (176 aa).

The protein belongs to the universal ribosomal protein uL6 family. In terms of assembly, part of the 50S ribosomal subunit.

Functionally, this protein binds to the 23S rRNA, and is important in its secondary structure. It is located near the subunit interface in the base of the L7/L12 stalk, and near the tRNA binding site of the peptidyltransferase center. This chain is Large ribosomal subunit protein uL6, found in Lactobacillus helveticus (strain DPC 4571).